The primary structure comprises 348 residues: Protein RecA (348 aa).

69 to 76 provides a ligand contact to ATP; sequence GPESSGKT.

This sequence belongs to the RecA family.

The protein localises to the cytoplasm. Functionally, can catalyze the hydrolysis of ATP in the presence of single-stranded DNA, the ATP-dependent uptake of single-stranded DNA by duplex DNA, and the ATP-dependent hybridization of homologous single-stranded DNAs. It interacts with LexA causing its activation and leading to its autocatalytic cleavage. This is Protein RecA from Gluconacetobacter polyoxogenes (Acetobacter polyoxogenes).